Reading from the N-terminus, the 352-residue chain is Phosphoribosylformylglycinamidine cyclo-ligase (352 aa).

It belongs to the AIR synthase family.

The protein resides in the cytoplasm. The catalysed reaction is 2-formamido-N(1)-(5-O-phospho-beta-D-ribosyl)acetamidine + ATP = 5-amino-1-(5-phospho-beta-D-ribosyl)imidazole + ADP + phosphate + H(+). The protein operates within purine metabolism; IMP biosynthesis via de novo pathway; 5-amino-1-(5-phospho-D-ribosyl)imidazole from N(2)-formyl-N(1)-(5-phospho-D-ribosyl)glycinamide: step 2/2. The polypeptide is Phosphoribosylformylglycinamidine cyclo-ligase (Pseudomonas entomophila (strain L48)).